The chain runs to 258 residues: 2-oxo-tetronate isomerase (258 aa).

Residue E143 is the Proton donor/acceptor of the active site. The Mg(2+) site is built by E143, D178, Q204, and E240. E240 (proton donor/acceptor) is an active-site residue.

It belongs to the hyi family. OtnI subfamily.

It catalyses the reaction 2-dehydro-L-erythronate = 3-dehydro-L-erythronate. The enzyme catalyses 2-dehydro-D-erythronate = 3-dehydro-D-erythronate. Its function is as follows. Catalyzes the isomerization of 2-oxo-tetronate to 3-oxo-tetronate. The protein is 2-oxo-tetronate isomerase of Haemophilus influenzae (strain ATCC 51907 / DSM 11121 / KW20 / Rd).